Reading from the N-terminus, the 213-residue chain is Uracil phosphoribosyltransferase (213 aa).

5-phospho-alpha-D-ribose 1-diphosphate is bound by residues R78, R103, and 131 to 139; that span reads DPMLATGGT. Residues I197 and 202–204 contribute to the uracil site; that span reads GDA. Residue D203 coordinates 5-phospho-alpha-D-ribose 1-diphosphate.

Belongs to the UPRTase family. Requires Mg(2+) as cofactor.

The catalysed reaction is UMP + diphosphate = 5-phospho-alpha-D-ribose 1-diphosphate + uracil. It functions in the pathway pyrimidine metabolism; UMP biosynthesis via salvage pathway; UMP from uracil: step 1/1. With respect to regulation, allosterically activated by GTP. Catalyzes the conversion of uracil and 5-phospho-alpha-D-ribose 1-diphosphate (PRPP) to UMP and diphosphate. The sequence is that of Uracil phosphoribosyltransferase from Bifidobacterium animalis subsp. lactis (strain AD011).